The chain runs to 220 residues: MRGRLFVMTGASGVGKGTVRAKVLERTRLFYSISMTTRPPRPGEVDGVDYYFVDRPTFEALVREDGFLEYAEYVGHLYGTPRAPVERALSRGEDVLLEIEVQGALQVKRAVPEAVLIFLLPPSLSELKRRLVYRGKDSPEKIQKRLEQAEWEIRNAHLFDYVVVNDVLEEAVADFLAILTAERRRSGRMGEALEMALRRDLALEAELDEILRRRYGGTGH.

A Guanylate kinase-like domain is found at glycine 3–threonine 180. Residue glycine 10–glycine 17 coordinates ATP.

It belongs to the guanylate kinase family.

The protein resides in the cytoplasm. It carries out the reaction GMP + ATP = GDP + ADP. Functionally, essential for recycling GMP and indirectly, cGMP. This Thermus thermophilus (strain ATCC BAA-163 / DSM 7039 / HB27) protein is Guanylate kinase.